Reading from the N-terminus, the 841-residue chain is Homeobox-leucine zipper protein ATHB-9 (841 aa).

Residues 1-18 (MMAHHSMDDRDSPDKGFD) show a composition bias toward basic and acidic residues. The interval 1 to 21 (MMAHHSMDDRDSPDKGFDSGK) is disordered. The homeobox DNA-binding region spans 18–81 (DSGKYVRYTP…NRRCREKQRK (64 aa)). Positions 85 to 118 (RLQTVNRKLSAMNKLLMEENDRLQKQVSNLVYEN) form a coiled coil. Disordered stretches follow at residues 140 to 162 (VVVSGQQRQQQNPTHQHPQRDVN) and 602 to 630 (DQKTNPNDHQSASRTRDLASSLDGSTKTD). The segment covering 145-155 (QQRQQQNPTHQ) has biased composition (low complexity). The START domain maps to 160–388 (DVNNPANLLS…IAQETSGEVQ (229 aa)). A compositionally biased stretch (polar residues) spans 603–614 (QKTNPNDHQSAS).

The protein belongs to the HD-ZIP homeobox family. Class III subfamily. As to quaternary structure, binds DNA as homodimer. Interacts with ESR1 and ESR2. Interacts with ZPR3.

It is found in the nucleus. Functionally, probable transcription factor involved in the determination of adaxial-abaxial polarity in ovule primordium. Specifies adaxial leaf fates. Binds to the DNA sequence 5'-GTAAT[GC]ATTAC-3'. The protein is Homeobox-leucine zipper protein ATHB-9 (ATHB-9) of Arabidopsis thaliana (Mouse-ear cress).